A 656-amino-acid polypeptide reads, in one-letter code: Heat shock 70 kDa protein, mitochondrial (656 aa).

The transit peptide at 1-23 (MFARRLRGAGSLAAASLARWQSS) directs the protein to the mitochondrion. Residues 624–656 (EYQQAAAGNSSSSSGNTDSSQGEQQQQGDQQKQ) are disordered. Residues 626-656 (QQAAAGNSSSSSGNTDSSQGEQQQQGDQQKQ) show a composition bias toward low complexity.

The protein belongs to the heat shock protein 70 family.

It localises to the mitochondrion matrix. The protein localises to the kinetoplast. May participate in eukaryotic mitochondrial DNA replication. The polypeptide is Heat shock 70 kDa protein, mitochondrial (MTP70) (Trypanosoma cruzi).